The primary structure comprises 427 residues: Probable threonylcarbamoyladenosine tRNA methylthiotransferase (427 aa).

The 107-residue stretch at 12–118 (MRVYVEGYGC…AGEILKNYVE (107 aa)) folds into the MTTase N-terminal domain. [4Fe-4S] cluster contacts are provided by cysteine 21, cysteine 57, cysteine 86, cysteine 155, cysteine 159, and cysteine 162. One can recognise a Radical SAM core domain in the interval 141–370 (LKPSLITPLP…DKLRRELSYL (230 aa)). One can recognise a TRAM domain in the interval 373–427 (KKYIGKAMKVLVLDEGKGYTDNFKVVKFEGGEVGEFRKVKITDAKTFGLKGELIL).

The protein belongs to the methylthiotransferase family. CDKAL1 subfamily. [4Fe-4S] cluster is required as a cofactor.

The catalysed reaction is N(6)-L-threonylcarbamoyladenosine(37) in tRNA + (sulfur carrier)-SH + AH2 + 2 S-adenosyl-L-methionine = 2-methylsulfanyl-N(6)-L-threonylcarbamoyladenosine(37) in tRNA + (sulfur carrier)-H + 5'-deoxyadenosine + L-methionine + A + S-adenosyl-L-homocysteine + 2 H(+). Functionally, catalyzes the methylthiolation of N6-threonylcarbamoyladenosine (t(6)A), leading to the formation of 2-methylthio-N6-threonylcarbamoyladenosine (ms(2)t(6)A) at position 37 in tRNAs that read codons beginning with adenine. This Methanocaldococcus jannaschii (strain ATCC 43067 / DSM 2661 / JAL-1 / JCM 10045 / NBRC 100440) (Methanococcus jannaschii) protein is Probable threonylcarbamoyladenosine tRNA methylthiotransferase.